We begin with the raw amino-acid sequence, 185 residues long: Peptidyl-tRNA hydrolase (185 aa).

Residue tyrosine 14 coordinates tRNA. Histidine 19 functions as the Proton acceptor in the catalytic mechanism. Positions 64, 66, and 112 each coordinate tRNA.

This sequence belongs to the PTH family. As to quaternary structure, monomer.

The protein localises to the cytoplasm. It carries out the reaction an N-acyl-L-alpha-aminoacyl-tRNA + H2O = an N-acyl-L-amino acid + a tRNA + H(+). In terms of biological role, hydrolyzes ribosome-free peptidyl-tRNAs (with 1 or more amino acids incorporated), which drop off the ribosome during protein synthesis, or as a result of ribosome stalling. Catalyzes the release of premature peptidyl moieties from peptidyl-tRNA molecules trapped in stalled 50S ribosomal subunits, and thus maintains levels of free tRNAs and 50S ribosomes. The polypeptide is Peptidyl-tRNA hydrolase (Alkaliphilus metalliredigens (strain QYMF)).